Here is a 39-residue protein sequence, read N- to C-terminus: Protein YkiC (39 aa).

A helical transmembrane segment spans residues 13 to 35 (LLSAKLCNCTQAIMTHIIASFLA).

It localises to the cell inner membrane. In Escherichia coli (strain K12), this protein is Protein YkiC.